Reading from the N-terminus, the 269-residue chain is Protein IAL1 (269 aa).

Residues 32–133 (SPCAACKFLR…QDLARAKYEL (102 aa)) enclose the LOB domain.

This sequence belongs to the LOB domain-containing protein family. Expressed in leaves, leaf primordia, immature ears, immature tassels, whole ovules, silk and husk leaves.

Its subcellular location is the nucleus. This chain is Protein IAL1, found in Zea mays (Maize).